Consider the following 355-residue polypeptide: Heat-inducible transcription repressor HrcA (355 aa).

The protein belongs to the HrcA family.

Negative regulator of class I heat shock genes (grpE-dnaK-dnaJ and groELS operons). Prevents heat-shock induction of these operons. This is Heat-inducible transcription repressor HrcA from Nitratidesulfovibrio vulgaris (strain ATCC 29579 / DSM 644 / CCUG 34227 / NCIMB 8303 / VKM B-1760 / Hildenborough) (Desulfovibrio vulgaris).